The primary structure comprises 602 residues: Aspartate--tRNA(Asp/Asn) ligase (602 aa).

An L-aspartate-binding site is contributed by Glu-176. The interval 200–203 (QQFK) is aspartate. Arg-222 and His-452 together coordinate L-aspartate. 222 to 224 (RDE) serves as a coordination point for ATP. ATP is bound at residue Glu-490. Position 497 (Arg-497) interacts with L-aspartate. Residue 542–545 (GIDR) coordinates ATP.

Belongs to the class-II aminoacyl-tRNA synthetase family. Type 1 subfamily. As to quaternary structure, homodimer.

Its subcellular location is the cytoplasm. The enzyme catalyses tRNA(Asx) + L-aspartate + ATP = L-aspartyl-tRNA(Asx) + AMP + diphosphate. Functionally, aspartyl-tRNA synthetase with relaxed tRNA specificity since it is able to aspartylate not only its cognate tRNA(Asp) but also tRNA(Asn). Reaction proceeds in two steps: L-aspartate is first activated by ATP to form Asp-AMP and then transferred to the acceptor end of tRNA(Asp/Asn). The chain is Aspartate--tRNA(Asp/Asn) ligase from Rickettsia africae (strain ESF-5).